The primary structure comprises 172 residues: Adenylate kinase isoenzyme 6 (172 aa).

Residues glycine 13, glycine 15, lysine 16, threonine 17, and threonine 18 each contribute to the ATP site. Positions 33–56 (NVGDLAREEQLYDGYDEEYDCPIL) are NMP. An NMPbind region spans residues 33-56 (NVGDLAREEQLYDGYDEEYDCPIL). Residues 108–118 (TRGYNEKKLTD) are LID. ATP is bound by residues arginine 109 and lysine 148.

The protein belongs to the adenylate kinase family. AK6 subfamily. In terms of assembly, monomer and homodimer. Interacts with small ribosomal subunit protein uS11. Not a structural component of 43S pre-ribosomes, but transiently interacts with them by binding to uS11. Interacts with COIL (via C-terminus). In terms of tissue distribution, expressed in heart, brain, placenta, lung, liver, skeletal muscle, kidney, pancreas, chorionic villi and the central nervous system.

It is found in the cytoplasm. The protein resides in the nucleus. It localises to the nucleoplasm. The protein localises to the cajal body. It catalyses the reaction AMP + ATP = 2 ADP. The catalysed reaction is ATP + H2O = ADP + phosphate + H(+). Broad-specificity nucleoside monophosphate (NMP) kinase that catalyzes the reversible transfer of the terminal phosphate group between nucleoside triphosphates and monophosphates. Also has ATPase activity. Involved in the late cytoplasmic maturation steps of the 40S ribosomal particles, specifically 18S rRNA maturation. While NMP activity is not required for ribosome maturation, ATPase activity is. Associates transiently with small ribosomal subunit protein uS11. ATP hydrolysis breaks the interaction with uS11. May temporarily remove uS11 from the ribosome to enable a conformational change of the ribosomal RNA that is needed for the final maturation step of the small ribosomal subunit. Its NMP activity may have a role in nuclear energy homeostasis. AMP and dAMP are the preferred substrates, but CMP and dCMP are also good substrates. IMP is phosphorylated to a much lesser extent. All nucleoside triphosphates ATP, GTP, UTP, CTP, dATP, dCTP, dGTP, and TTP are accepted as phosphate donors. CTP is the best phosphate donor, followed by UTP, ATP, GTP and dCTP. May be involved in regulation of Cajal body (CB) formation. This Homo sapiens (Human) protein is Adenylate kinase isoenzyme 6.